The sequence spans 1036 residues: Ubiquitin carboxyl-terminal hydrolase 48 (1036 aa).

The USP domain maps to 89 to 421; the sequence is VGLTNLGASC…NAYMLVYRLQ (333 aa). Cys-98 functions as the Nucleophile in the catalytic mechanism. His-353 serves as the catalytic Proton acceptor. DUSP domains follow at residues 460–554, 569–692, and 712–825; these read QSVD…KALC, NQLN…YKEC, and MIAK…RIEV. Residues 611–644 are disordered; it reads DEQDGEAEQSNGKINGSPFSKDESKEEKKEEEEE. Polar residues predominate over residues 618 to 628; it reads EQSNGKINGSP. A disordered region spans residues 881–924; it reads APELNVSSSETEEDKEEAKPDGEKDPDFNQSNGGTKRQKTSQQG. Ser-887, Ser-888, and Ser-889 each carry phosphoserine. A compositionally biased stretch (basic and acidic residues) spans 896-907; sequence EEAKPDGEKDPD. Polar residues predominate over residues 908-924; that stretch reads FNQSNGGTKRQKTSQQG. Residues 930–1010 form the Ubiquitin-like domain; that stretch reads KQVIRRSTRH…ILLKADEPIA (81 aa). Lys-957 carries the N6-acetyllysine modification.

Belongs to the peptidase C19 family. Interacts with TRAF2 and RELA. Interacts with GPS1. As to expression, present in the brain, in particular in the postsynaptic density and the dendritic lipid raft fractions (at protein level).

The protein resides in the cytoplasm. Its subcellular location is the nucleus. It localises to the cell projection. The protein localises to the cilium. The enzyme catalyses Thiol-dependent hydrolysis of ester, thioester, amide, peptide and isopeptide bonds formed by the C-terminal Gly of ubiquitin (a 76-residue protein attached to proteins as an intracellular targeting signal).. In terms of biological role, deubiquitinase that recognizes and hydrolyzes the peptide bond at the C-terminal Gly of ubiquitin. Involved in the processing of polyubiquitin precursors as well as that of ubiquitinated proteins. Plays a role in the regulation of NF-kappa-B activation by TNF receptor superfamily via its interactions with RELA and TRAF2. May also play a regulatory role at postsynaptic sites. Plays an important role in cell cycle progression by deubiquitinating Aurora B/AURKB and thereby extending its stability. In the context of H. pylori infection, stabilizes nuclear RELA through deubiquitination, thereby promoting the transcriptional activity of RELA to prolong TNFAIP3 de novo synthesis. Consequently, TNFAIP3 suppresses caspase activity and apoptotic cell death. Also functions in the modulation of the ciliary and synaptic transport as well as cytoskeleton organization, which are key for photoreceptor function and homeostasis. To achieve this, stabilizes the levels of the retinal degeneration-associated proteins ARL3 and UNC119 using distinct mechanisms. Plays a positive role in pyroptosis by stabilizing gasdermin E/GSDME through removal of its 'Lys-48'-linked ubiquitination. The chain is Ubiquitin carboxyl-terminal hydrolase 48 (Usp48) from Rattus norvegicus (Rat).